A 324-amino-acid chain; its full sequence is Methyltransferase pytC (324 aa).

This sequence belongs to the methyltransferase superfamily. LaeA methyltransferase family.

It participates in secondary metabolite biosynthesis. Functionally, methyltransferase; part of the gene cluster that mediates the biosynthesis of pyranterreones, a family of antioxidative compounds. The first step of pyranonigrins biosynthesis is performed by the hybrid PKS-NRPS synthetase pytA that condenses 4 malonyl-CoA units ato the acetyl starter unit by the modular PKS of pytA. The acyl chain is then connected to an L-serine through the amide bond by the modular NRPS of pytA. A tetramic acid is formed and released from the PKS-NRPS pytA to give pyranterreone 5 with the help of the thioesterase pytI. Pyranterreone 5 could be methylated by pytC to afford pyranterreone 6. Both pyranterreones 5 and 6 are subsequently oxidized by the FAD-linked oxidoreductase pytB and the cytochrome P450 monooxygenase pytD to form the fused gamma-pyrone core, resulting in pyranterreones 7 and 11, respectively. The hydroxy group at C-8 of pyranterreones 7 and 11 are dehydrated by the aspartyl protease pytH to form a delta-7 double bond to give pyranterreones 3 and 1, 2 accordingly. The exo-methylene of pyranterreone 3 could be reduced into a pendant methyl by reductase pytE to provide pyranterreone 4, also known as cordylactam. Pyranterreone 4 can be reconverted to pyranterreone 3 through pytB-catalyzed dehydrogenation or further oxidized to pyranterreones 9 and 10. In Aspergillus terreus (strain NIH 2624 / FGSC A1156), this protein is Methyltransferase pytC.